Reading from the N-terminus, the 185-residue chain is Elongation factor P (185 aa).

This sequence belongs to the elongation factor P family.

Its subcellular location is the cytoplasm. It functions in the pathway protein biosynthesis; polypeptide chain elongation. Functionally, involved in peptide bond synthesis. Stimulates efficient translation and peptide-bond synthesis on native or reconstituted 70S ribosomes in vitro. Probably functions indirectly by altering the affinity of the ribosome for aminoacyl-tRNA, thus increasing their reactivity as acceptors for peptidyl transferase. The sequence is that of Elongation factor P from Halalkalibacterium halodurans (strain ATCC BAA-125 / DSM 18197 / FERM 7344 / JCM 9153 / C-125) (Bacillus halodurans).